The following is a 757-amino-acid chain: Filensin (757 aa).

Residues 1–39 are head; that stretch reads MYRRSYVFQTRKEQYERAEEAPRAAEPDRLAEARAAAPN. Ser5 is modified (phosphoserine). The IF rod domain occupies 39 to 319; that stretch reads NLAALQGLGE…RIIENEGNRL (281 aa). The segment at 40-74 is coil 1A; the sequence is LAALQGLGERVAAHVQRARALEQRHAVLRRQLDAF. At Ala41 the chain carries N-acetylalanine. A linker 1 region spans residues 75–83; it reads QRLDELAGP. The tract at residues 84-183 is coil 1B; sequence EDALARHVEG…RYKKNLLEIQ (100 aa). The tract at residues 184 to 200 is linker 12; the sequence is TYVTILQQIIQTTPQAA. The coil 2 stretch occupies residues 201-319; it reads AITSGMREEK…RIIENEGNRL (119 aa). The interval 320 to 756 is tail; the sequence is SSAFIETPIT…KKLGEKGSSS (437 aa). Residues Ser340 and Ser419 each carry the phosphoserine modification. Disordered stretches follow at residues 406–436 and 493–705; these read EGES…GGKI and GVVV…PPRK. Residue Gly433 is the site of N-myristoyl glycine attachment. Over residues 493-512 the composition is skewed to low complexity; the sequence is GVVVSKGDDSVPPDSGVEPS. Ser512 carries the post-translational modification Phosphoserine. The span at 528–658 shows a compositional bias: basic and acidic residues; the sequence is QEKEDGLKEE…KQDDQKEEGA (131 aa). Repeat 1 spans residues 532–545; the sequence is DGLKEEGGPPEGKG. The segment at 532–622 is 7 X 14 AA tandem repeats; the sequence is DGLKEEGGPP…EEEGPLQKKE (91 aa). The stretch at 546-552 is one 2; truncated repeat; it reads EPPEGKG. 5 tandem repeats follow at residues 553 to 566, 567 to 580, 581 to 594, 595 to 608, and 609 to 622. Phosphothreonine is present on residues Thr628 and Thr674. Phosphoserine is present on residues Ser701, Ser754, and Ser755.

Belongs to the intermediate filament family. Part of a complex required for lens intermediate filament formation composed of BFSP1, BFSP2 and CRYAA. Identified in a complex that contains VIM, EZR, AHNAK, BFSP1, BFSP2, ANK2, PLEC, PRX and spectrin. Found in a complex composed of PPL (via C-terminal linker domain), BFSP1 and BFSP2 in the retinal lens. Within the complex interacts with BFSP2. Interacts (via C-terminus) with MIP (via C-terminus) in aged lens fiber cells. In terms of processing, proteolytically cleaved during lens cell fiber differentiation with increased fragmentation as fiber cell age increases. Post-translationally, myristoylated at Gly-433 following proteolytic cleavage at Asp-432. Acetylated at Ala-41 following proteolytic cleavage at Leu-40. Abundantly expressed in both the inner and outer cortex of the retina, expressed at a lower level in the nucleus of the retina (at protein level). Detected in eye lens fiber cells (at protein level).

Its subcellular location is the cell membrane. It localises to the cytoplasm. The protein resides in the cytoskeleton. The protein localises to the cell cortex. Its function is as follows. Required for the correct formation of lens intermediate filaments as part of a complex composed of BFSP1, BFSP2 and CRYAA. Involved in altering the calcium regulation of MIP water permeability. This chain is Filensin (BFSP1), found in Bos taurus (Bovine).